The following is a 948-amino-acid chain: Glycine dehydrogenase (decarboxylating) (948 aa).

Residue lysine 696 is modified to N6-(pyridoxal phosphate)lysine.

It belongs to the GcvP family. In terms of assembly, the glycine cleavage system is composed of four proteins: P, T, L and H. The cofactor is pyridoxal 5'-phosphate.

The catalysed reaction is N(6)-[(R)-lipoyl]-L-lysyl-[glycine-cleavage complex H protein] + glycine + H(+) = N(6)-[(R)-S(8)-aminomethyldihydrolipoyl]-L-lysyl-[glycine-cleavage complex H protein] + CO2. In terms of biological role, the glycine cleavage system catalyzes the degradation of glycine. The P protein binds the alpha-amino group of glycine through its pyridoxal phosphate cofactor; CO(2) is released and the remaining methylamine moiety is then transferred to the lipoamide cofactor of the H protein. In Akkermansia muciniphila (strain ATCC BAA-835 / DSM 22959 / JCM 33894 / BCRC 81048 / CCUG 64013 / CIP 107961 / Muc), this protein is Glycine dehydrogenase (decarboxylating).